The primary structure comprises 375 residues: MKFELDTTDGRARRGRLVFDRGVVETPAFMPVGTYGTVKGMTPEEVEATGAQIILGNTFHLWLRPGQEVMKLHGDLHDFMQWKGPILTDSGGFQVFSLGDIRKITEKGVHFRNPINGDPIFLDPEKSMEIQYDLGSDIVMIFDECTPYPADWDYAKRSMEMSLRWAQRSRDRFDSLENKNALFGIIQGSVYEDLRDISVKGLVEIGFDGYAVGGLAVGEPKEDMHRILEHVCPQIPEDKPRYLMGVGKPEDLVEGVRRGIDMFDCVMPTRNARNGHLFVTDGVVKIRNAKHKSDTSTLDAECDCYTCRHYSRAYLYHLDRCNEILGARLNTIHNLRYYQRLMAGLRKAIEEGKLESFVTDFYQRQGRDVPPLNVD.

Asp-89 serves as the catalytic Proton acceptor. Residues 89–93, Asp-143, Gln-187, and Gly-214 contribute to the substrate site; that span reads DSGGF. An RNA binding region spans residues 245-251; that stretch reads GVGKPED. Asp-264 acts as the Nucleophile in catalysis. The segment at 269–273 is RNA binding; important for wobble base 34 recognition; the sequence is TRNAR. The Zn(2+) site is built by Cys-302, Cys-304, Cys-307, and His-333.

It belongs to the queuine tRNA-ribosyltransferase family. As to quaternary structure, homodimer. Within each dimer, one monomer is responsible for RNA recognition and catalysis, while the other monomer binds to the replacement base PreQ1. Zn(2+) is required as a cofactor.

It catalyses the reaction 7-aminomethyl-7-carbaguanine + guanosine(34) in tRNA = 7-aminomethyl-7-carbaguanosine(34) in tRNA + guanine. The protein operates within tRNA modification; tRNA-queuosine biosynthesis. In terms of biological role, catalyzes the base-exchange of a guanine (G) residue with the queuine precursor 7-aminomethyl-7-deazaguanine (PreQ1) at position 34 (anticodon wobble position) in tRNAs with GU(N) anticodons (tRNA-Asp, -Asn, -His and -Tyr). Catalysis occurs through a double-displacement mechanism. The nucleophile active site attacks the C1' of nucleotide 34 to detach the guanine base from the RNA, forming a covalent enzyme-RNA intermediate. The proton acceptor active site deprotonates the incoming PreQ1, allowing a nucleophilic attack on the C1' of the ribose to form the product. After dissociation, two additional enzymatic reactions on the tRNA convert PreQ1 to queuine (Q), resulting in the hypermodified nucleoside queuosine (7-(((4,5-cis-dihydroxy-2-cyclopenten-1-yl)amino)methyl)-7-deazaguanosine). In Enterobacter sp. (strain 638), this protein is Queuine tRNA-ribosyltransferase.